The following is a 514-amino-acid chain: H/ACA ribonucleoprotein complex subunit DKC1 (514 aa).

Ala-2 carries the N-acetylalanine modification. Residues 2 to 21 form a nucleolar localization region; that stretch reads ADAEVIILPKKHKKKKERKS. A Glycyl lysine isopeptide (Lys-Gly) (interchain with G-Cter in SUMO2) cross-link involves residue Lys-20. A Phosphoserine modification is found at Ser-21. Residues Lys-39 and Lys-43 each participate in a glycyl lysine isopeptide (Lys-Gly) (interchain with G-Cter in SUMO2) cross-link. The active-site Nucleophile is Asp-125. Lys-191 is covalently cross-linked (Glycyl lysine isopeptide (Lys-Gly) (interchain with G-Cter in SUMO2)). The 76-residue stretch at 296-371 folds into the PUA domain; sequence HKRLVMKDSA…IVAKIKRVIM (76 aa). Ser-387 carries the post-translational modification Phosphoserine. Lys-394 participates in a covalent cross-link: Glycyl lysine isopeptide (Lys-Gly) (interchain with G-Cter in SUMO2). Lys-413 is covalently cross-linked (Glycyl lysine isopeptide (Lys-Gly) (interchain with G-Cter in SUMO1); alternate). Residue Lys-413 forms a Glycyl lysine isopeptide (Lys-Gly) (interchain with G-Cter in SUMO2); alternate linkage. Residues Lys-424 and Lys-433 each participate in a glycyl lysine isopeptide (Lys-Gly) (interchain with G-Cter in SUMO2) cross-link. Positions 443–514 are disordered; the sequence is KTAKRKRESE…KAKEVELVSE (72 aa). The nuclear and nucleolar localization stretch occupies residues 446 to 514; the sequence is KRKRESESES…KAKEVELVSE (69 aa). A phosphoserine mark is found at Ser-451, Ser-453, and Ser-455. The residue at position 458 (Thr-458) is a Phosphothreonine. Lys-467 participates in a covalent cross-link: Glycyl lysine isopeptide (Lys-Gly) (interchain with G-Cter in SUMO2). Residues 468–480 show a composition bias toward basic residues; that stretch reads KEKKKSKKDKKAK. Phosphoserine occurs at positions 485, 494, and 513.

Belongs to the pseudouridine synthase TruB family. In terms of assembly, part of the H/ACA small nucleolar ribonucleoprotein (H/ACA snoRNP) complex, which contains NHP2/NOLA2, GAR1/NOLA1, NOP10/NOLA3, and DKC1/NOLA4, which is presumed to be the catalytic subunit. The complex contains a stable core formed by binding of one or two NOP10-DKC1 heterodimers to NHP2; GAR1 subsequently binds to this core via DKC1. The complex binds a box H/ACA small nucleolar RNA (snoRNA), which may target the specific site of modification within the RNA substrate. During assembly, the complex contains NAF1 instead of GAR1/NOLA1. The complex also interacts with TERC, which contains a 3'-terminal domain related to the box H/ACA snoRNAs. Specific interactions with snoRNAs or TERC are mediated by GAR1 and NHP2. Associates with NOLC1/NOPP140. H/ACA snoRNPs interact with the SMN complex, consisting of SMN1 or SMN2, GEMIN2/SIP1, DDX20/GEMIN3, and GEMIN4. This is mediated by interaction between GAR1 and SMN1 or SMN2. The SMN complex may be required for correct assembly of the H/ACA snoRNP complex. Component of the telomerase holoenzyme complex composed of one molecule of TERT, one molecule of WRAP53/TCAB1, two molecules of H/ACA ribonucleoprotein complex subunits DKC1, NOP10, NHP2 and GAR1, and a telomerase RNA template component (TERC). The telomerase holoenzyme complex is associated with TEP1, SMG6/EST1A and POT1. Interacts with SHQ1; this interaction may lead to the stabilization of DKC1, from the time of its synthesis until its association with NOP10, NHP2, and NAF1 at the nascent H/ACA RNA. Interacts with HMBOX1. Interacts with DHX36. Ubiquitously expressed.

The protein localises to the nucleus. It is found in the nucleolus. Its subcellular location is the cajal body. It localises to the cytoplasm. The enzyme catalyses uridine in 5S rRNA = pseudouridine in 5S rRNA. In terms of biological role, catalytic subunit of H/ACA small nucleolar ribonucleoprotein (H/ACA snoRNP) complex, which catalyzes pseudouridylation of rRNA. This involves the isomerization of uridine such that the ribose is subsequently attached to C5, instead of the normal N1. Each rRNA can contain up to 100 pseudouridine ('psi') residues, which may serve to stabilize the conformation of rRNAs. Required for ribosome biogenesis and telomere maintenance. Also required for correct processing or intranuclear trafficking of TERC, the RNA component of the telomerase reverse transcriptase (TERT) holoenzyme. Functionally, promotes cell to cell and cell to substratum adhesion, increases the cell proliferation rate and leads to cytokeratin hyper-expression. The polypeptide is H/ACA ribonucleoprotein complex subunit DKC1 (Homo sapiens (Human)).